A 478-amino-acid polypeptide reads, in one-letter code: Sulfate adenylyltransferase subunit 1 (478 aa).

The 217-residue stretch at 28–244 folds into the tr-type G domain; that stretch reads KTMLRFLTCG…LESVDVVNAS (217 aa). Residues 37–44 are G1; the sequence is GSVDDGKS. Position 37–44 (37–44) interacts with GTP; that stretch reads GSVDDGKS. Residues 95-99 form a G2 region; sequence GITID. The G3 stretch occupies residues 116-119; sequence DTPG. Residues 116 to 120 and 171 to 174 each bind GTP; these read DTPGH and NKMD. The segment at 171–174 is G4; sequence NKMD. Positions 209–211 are G5; sequence SAL.

This sequence belongs to the TRAFAC class translation factor GTPase superfamily. Classic translation factor GTPase family. CysN/NodQ subfamily. In terms of assembly, heterodimer composed of CysD, the smaller subunit, and CysN.

The catalysed reaction is sulfate + ATP + H(+) = adenosine 5'-phosphosulfate + diphosphate. It participates in sulfur metabolism; hydrogen sulfide biosynthesis; sulfite from sulfate: step 1/3. Functionally, with CysD forms the ATP sulfurylase (ATPS) that catalyzes the adenylation of sulfate producing adenosine 5'-phosphosulfate (APS) and diphosphate, the first enzymatic step in sulfur assimilation pathway. APS synthesis involves the formation of a high-energy phosphoric-sulfuric acid anhydride bond driven by GTP hydrolysis by CysN coupled to ATP hydrolysis by CysD. This chain is Sulfate adenylyltransferase subunit 1, found in Yersinia enterocolitica serotype O:8 / biotype 1B (strain NCTC 13174 / 8081).